Here is a 127-residue protein sequence, read N- to C-terminus: Large ribosomal subunit protein bL12 (127 aa).

It belongs to the bacterial ribosomal protein bL12 family. As to quaternary structure, homodimer. Part of the ribosomal stalk of the 50S ribosomal subunit. Forms a multimeric L10(L12)X complex, where L10 forms an elongated spine to which 2 to 4 L12 dimers bind in a sequential fashion. Binds GTP-bound translation factors.

Its function is as follows. Forms part of the ribosomal stalk which helps the ribosome interact with GTP-bound translation factors. Is thus essential for accurate translation. This is Large ribosomal subunit protein bL12 from Clavibacter michiganensis subsp. michiganensis (strain NCPPB 382).